The following is a 118-amino-acid chain: Non-specific lipid-transfer protein 3 (118 aa).

Positions 1 to 25 (MARAAATQLVLVAMVAAMLLVATDA) are cleaved as a signal peptide. 4 disulfides stabilise this stretch: Cys-29–Cys-77, Cys-39–Cys-54, Cys-55–Cys-100, and Cys-75–Cys-114.

It belongs to the plant LTP family.

In terms of biological role, plant non-specific lipid-transfer proteins transfer phospholipids as well as galactolipids across membranes. May play a role in wax or cutin deposition in the cell walls of expanding epidermal cells and certain secretory tissues. The chain is Non-specific lipid-transfer protein 3 (LTP3) from Hordeum vulgare (Barley).